Reading from the N-terminus, the 163-residue chain is Nucleotide-binding protein YajQ (163 aa).

This sequence belongs to the YajQ family.

Its function is as follows. Nucleotide-binding protein. This chain is Nucleotide-binding protein YajQ, found in Shigella dysenteriae serotype 1 (strain Sd197).